Consider the following 198-residue polypeptide: Ciliary neurotrophic factor (198 aa).

It belongs to the CNTF family. As to expression, nervous system.

It localises to the cytoplasm. Its function is as follows. CNTF is a survival factor for various neuronal cell types. Seems to prevent the degeneration of motor axons after axotomy. This is Ciliary neurotrophic factor (Cntf) from Mus musculus (Mouse).